Here is a 227-residue protein sequence, read N- to C-terminus: Translation initiation factor 6 (227 aa).

It belongs to the eIF-6 family.

Functionally, binds to the 50S ribosomal subunit and prevents its association with the 30S ribosomal subunit to form the 70S initiation complex. In Methanococcus aeolicus (strain ATCC BAA-1280 / DSM 17508 / OCM 812 / Nankai-3), this protein is Translation initiation factor 6.